A 261-amino-acid polypeptide reads, in one-letter code: MSLPASFDLTPEDAKLLLAGNVHLGSKNVQVHNKPYVYKTRPDGVNIINIGKTWEKIVLAARIIAAIPNANDVAVCSSRTFGQRAVLKFAAHTGATAIAGRFTPGNFTNYITRSFKEPRLVIVTDPRTDAQAIKESSYVNIPVIALTDMDSPSEYVDVAIPCNNKGKHSIGLIWWLLAREVLRSRGIIPDRTTEWSVMPDLYFYRDPEEIEQNAAEEAKAEETEEAPAAEAETEWTGETDDVDWADSGATPAAEDAAASNW.

Residue S2 is modified to N-acetylserine. Residues 212-261 form a disordered region; it reads QNAAEEAKAEETEEAPAAEAETEWTGETDDVDWADSGATPAAEDAAASNW. The span at 222–244 shows a compositional bias: acidic residues; sequence ETEEAPAAEAETEWTGETDDVDW.

The protein belongs to the universal ribosomal protein uS2 family. Component of the small ribosomal subunit. Mature ribosomes consist of a small (40S) and a large (60S) subunit. The 40S subunit contains about 33 different proteins and 1 molecule of RNA (18S). The 60S subunit contains about 49 different proteins and 3 molecules of RNA (25S, 5.8S and 5S). Interacts with RPS21.

It is found in the cytoplasm. Functionally, required for the assembly and/or stability of the 40S ribosomal subunit. Required for the processing of the 20S rRNA-precursor to mature 18S rRNA in a late step of the maturation of 40S ribosomal subunits. The protein is Small ribosomal subunit protein uS2 of Candida tropicalis (Yeast).